Reading from the N-terminus, the 896-residue chain is Probable DNA-directed RNA polymerase (896 aa).

Catalysis depends on residues Asp-546, Lys-617, and Asp-798.

Belongs to the phage and mitochondrial RNA polymerase family.

The protein localises to the mitochondrion. It catalyses the reaction RNA(n) + a ribonucleoside 5'-triphosphate = RNA(n+1) + diphosphate. Functionally, DNA-dependent RNA polymerase catalyzes the transcription of DNA into RNA using the four ribonucleoside triphosphates as substrates. The sequence is that of Probable DNA-directed RNA polymerase from Neurospora crassa.